The chain runs to 109 residues: Large ribosomal subunit protein uL24 (109 aa).

The protein belongs to the universal ribosomal protein uL24 family. Part of the 50S ribosomal subunit.

In terms of biological role, one of two assembly initiator proteins, it binds directly to the 5'-end of the 23S rRNA, where it nucleates assembly of the 50S subunit. Functionally, one of the proteins that surrounds the polypeptide exit tunnel on the outside of the subunit. The polypeptide is Large ribosomal subunit protein uL24 (Hamiltonella defensa subsp. Acyrthosiphon pisum (strain 5AT)).